A 205-amino-acid chain; its full sequence is Large ribosomal subunit protein uL4 (205 aa).

Positions 43–95 are disordered; it reads RSGNRAQKDRAEVKHSTKKPWRQKGTGRARAGMTSSPLWRGGGRAFPNSPEEN. The segment covering 48-57 has biased composition (basic and acidic residues); it reads AQKDRAEVKH. Residues 58–69 show a composition bias toward basic residues; it reads STKKPWRQKGTG.

This sequence belongs to the universal ribosomal protein uL4 family. As to quaternary structure, part of the 50S ribosomal subunit.

In terms of biological role, one of the primary rRNA binding proteins, this protein initially binds near the 5'-end of the 23S rRNA. It is important during the early stages of 50S assembly. It makes multiple contacts with different domains of the 23S rRNA in the assembled 50S subunit and ribosome. Its function is as follows. Forms part of the polypeptide exit tunnel. The polypeptide is Large ribosomal subunit protein uL4 (Bordetella bronchiseptica (strain ATCC BAA-588 / NCTC 13252 / RB50) (Alcaligenes bronchisepticus)).